Reading from the N-terminus, the 179-residue chain is Large ribosomal subunit protein uL5 (179 aa).

This sequence belongs to the universal ribosomal protein uL5 family. As to quaternary structure, part of the 50S ribosomal subunit; part of the 5S rRNA/L5/L18/L25 subcomplex. Contacts the 5S rRNA and the P site tRNA. Forms a bridge to the 30S subunit in the 70S ribosome.

Its function is as follows. This is one of the proteins that bind and probably mediate the attachment of the 5S RNA into the large ribosomal subunit, where it forms part of the central protuberance. In the 70S ribosome it contacts protein S13 of the 30S subunit (bridge B1b), connecting the 2 subunits; this bridge is implicated in subunit movement. Contacts the P site tRNA; the 5S rRNA and some of its associated proteins might help stabilize positioning of ribosome-bound tRNAs. This chain is Large ribosomal subunit protein uL5, found in Haemophilus influenzae (strain 86-028NP).